Here is a 960-residue protein sequence, read N- to C-terminus: MTETGSSLMSDKTPDPSVAAFKEQQDRYRDTVFLPRTGFPMRGGLPKREPETLARWAATGLDEKIREAGKGRPVFTLHDGPPYANGHIHIGHALNKVMKDVINRAHRMSGYEVRYLPGWDCHGLPIEWRIEEQYRKAGKDKDQVPLLQFRAECRQYAAQWVQKQAEDFKRIGVQAEWANRYVTMDFSSEAKIVDEIGKFLLNGSLYRGLRPVMWSPVEKTALAEAEIEYHDIDSTTIFVAFPIIKDPTPAHALNGVSAVIWTTTPWTIPANRALAYGPDITYVVLRVDETNENSVVPQGAKLLVAEDRVDAFCTETGITAHHILYTLPGNGLEGAVCAHPLRGRGYEYDVPMLPGDFVTTDAGTGLVHMAPSHGQDDFMLCRQYGIEVPELVQDDGRYAPWVPHLAGIHVFKAADPVCDLLTEARQSAEHDDAPATGLMARGTVRHSYPHSWRSKAPIIFRATPQWFIAMDGETKLREKSLSALDNVTFVPEAARRRLTSMIEQRPDWCISRQRAWGVPIAVFVEKRTGEVLRDAAVMQRIVEAFREKGADIWYEADPSLFLGEGRNPADYEQVFDIVDVWFESGSTHRFDLGQEGLNFPADLYLEGSDQHRGWFQSSLLESVGTMGVAPYKALVTNGFVMDEQGRKMSKSLGNVVAPSDVTESLGADILRLWVLNSDTNEDLRIGQDILKQQGELYRRLRNTLRWLLGALDGFTPEEAVSYADLPPLEQYILHRLTELRGLIASAVETHQWVGVYPALHGFCTTDLSAFYFDIRKDAIYCDAPSDPTRRAARTVLDALHRALCTWLAPVLVFTAEEAWQARFGEDDSVHLAQFFEPEAEWNDPELGNRWEDIRAYRRLITTELETARRDGTIGSSLEASVTLPLSQEEAGIFGGLDWAELLITSHAETELLPGDTAHGGPQVERAPGHKCARCWKVLPEVGENTEHPALCRRCIDVVSA.

The short motif at 82-92 (PYANGHIHIGH) is the 'HIGH' region element. An L-isoleucyl-5'-AMP-binding site is contributed by Glu606. Positions 647–651 (KMSKS) match the 'KMSKS' region motif. ATP is bound at residue Lys650. Cys931, Cys934, Cys951, and Cys954 together coordinate Zn(2+).

The protein belongs to the class-I aminoacyl-tRNA synthetase family. IleS type 1 subfamily. In terms of assembly, monomer. It depends on Zn(2+) as a cofactor.

Its subcellular location is the cytoplasm. The catalysed reaction is tRNA(Ile) + L-isoleucine + ATP = L-isoleucyl-tRNA(Ile) + AMP + diphosphate. Catalyzes the attachment of isoleucine to tRNA(Ile). As IleRS can inadvertently accommodate and process structurally similar amino acids such as valine, to avoid such errors it has two additional distinct tRNA(Ile)-dependent editing activities. One activity is designated as 'pretransfer' editing and involves the hydrolysis of activated Val-AMP. The other activity is designated 'posttransfer' editing and involves deacylation of mischarged Val-tRNA(Ile). The polypeptide is Isoleucine--tRNA ligase (Gluconobacter oxydans (strain 621H) (Gluconobacter suboxydans)).